The sequence spans 228 residues: Flagellar L-ring protein (228 aa).

A signal peptide spans 1–17; sequence MHYLRYFAIAFLLLLSS. C18 carries the N-palmitoyl cysteine lipid modification. C18 is lipidated: S-diacylglycerol cysteine.

Belongs to the FlgH family. The basal body constitutes a major portion of the flagellar organelle and consists of four rings (L,P,S, and M) mounted on a central rod.

The protein localises to the cell membrane. It is found in the bacterial flagellum basal body. In terms of biological role, assembles around the rod to form the L-ring and probably protects the motor/basal body from shearing forces during rotation. This chain is Flagellar L-ring protein, found in Wigglesworthia glossinidia brevipalpis.